A 369-amino-acid polypeptide reads, in one-letter code: Ribonuclease D (369 aa).

In terms of domain architecture, 3'-5' exonuclease spans 4 to 168; it reads EIITTTAQLH…CLEKLQQQLE (165 aa). Residues 207–286 enclose the HRDC domain; it reads DRQGLAIIKA…TQVISQDEST (80 aa).

This sequence belongs to the RNase D family. Requires a divalent metal cation as cofactor.

Its subcellular location is the cytoplasm. It catalyses the reaction Exonucleolytic cleavage that removes extra residues from the 3'-terminus of tRNA to produce 5'-mononucleotides.. Functionally, exonuclease involved in the 3' processing of various precursor tRNAs. Initiates hydrolysis at the 3'-terminus of an RNA molecule and releases 5'-mononucleotides. The sequence is that of Ribonuclease D from Psychromonas ingrahamii (strain DSM 17664 / CCUG 51855 / 37).